The following is a 264-amino-acid chain: Enhancer of mRNA-decapping protein 1 (264 aa).

Disordered stretches follow at residues methionine 1 to isoleucine 180 and tyrosine 193 to tyrosine 264. A compositionally biased stretch (basic residues) spans glycine 63–serine 74. Positions asparagine 83–leucine 92 are enriched in polar residues. A compositionally biased stretch (pro residues) spans proline 108–threonine 118. Composition is skewed to low complexity over residues glutamine 119 to threonine 134, asparagine 161 to asparagine 172, and asparagine 208 to serine 226. Over residues phenylalanine 248–tyrosine 264 the composition is skewed to polar residues.

The protein belongs to the EDC family.

The protein localises to the cytoplasm. Functionally, mRNA-binding protein which stimulates mRNA decapping. This chain is Enhancer of mRNA-decapping protein 1 (EDC1), found in Candida albicans (strain SC5314 / ATCC MYA-2876) (Yeast).